The chain runs to 297 residues: Bifunctional protein FolD 2 (297 aa).

NADP(+) is bound by residues 173 to 175 (GKS), serine 198, and isoleucine 239.

It belongs to the tetrahydrofolate dehydrogenase/cyclohydrolase family. Homodimer.

The enzyme catalyses (6R)-5,10-methylene-5,6,7,8-tetrahydrofolate + NADP(+) = (6R)-5,10-methenyltetrahydrofolate + NADPH. It catalyses the reaction (6R)-5,10-methenyltetrahydrofolate + H2O = (6R)-10-formyltetrahydrofolate + H(+). Its pathway is one-carbon metabolism; tetrahydrofolate interconversion. Catalyzes the oxidation of 5,10-methylenetetrahydrofolate to 5,10-methenyltetrahydrofolate and then the hydrolysis of 5,10-methenyltetrahydrofolate to 10-formyltetrahydrofolate. The sequence is that of Bifunctional protein FolD 2 from Sinorhizobium medicae (strain WSM419) (Ensifer medicae).